We begin with the raw amino-acid sequence, 288 residues long: Disulfide-bond oxidoreductase YghU (288 aa).

Residues N26, 52–54 (TPN), Q87, I101, 117–118 (ES), Q151, and R178 each bind glutathione. Residues 46 to 133 (QLYSLGTPNG…YLAEKFGYFL (88 aa)) form the GST N-terminal domain. In terms of domain architecture, GST C-terminal spans 139-265 (KRTETMNWLF…RIVNRTNGPL (127 aa)). Residues 260–288 (RTNGPLNEQLHERHDASDFETNTEDKRQG) are disordered. Basic and acidic residues predominate over residues 268–288 (QLHERHDASDFETNTEDKRQG).

The protein belongs to the GST superfamily. Nu-class GSH transferase family. Homodimer.

In terms of biological role, exhibits a robust glutathione (GSH)-dependent disulfide-bond reductase activity toward the model substrate, 2-hydroxyethyl disulfide; the actual physiological substrates are not known. Also displays a modest GSH-dependent peroxidase activity toward several organic hydroperoxides, such as cumene hydroperoxide and linoleic acid 13(S)-hydroperoxide, but does not reduce H(2)O(2) or tert-butyl hydroperoxide at appreciable rates. Exhibits little or no GSH transferase activity with most typical electrophilic substrates, and has no detectable transferase activity toward 1-chloro-2,4-dinitrobenzene (CDNB) with glutathionylspermidine (GspSH) as the nucleophilic substrate. The polypeptide is Disulfide-bond oxidoreductase YghU (yghU) (Escherichia coli (strain K12)).